A 210-amino-acid chain; its full sequence is Transmembrane protein 61 (210 aa).

A run of 2 helical transmembrane segments spans residues 18-38 (YCMTVSGTVVLVAGTLCFAWW) and 69-89 (VSFVCCGAGGLLLLIGLLWSV). The segment at 140 to 172 (VAEGPPTPPAYPTEEALEPSGSRDALLSTQPAW) is disordered.

It localises to the membrane. In Homo sapiens (Human), this protein is Transmembrane protein 61 (TMEM61).